A 501-amino-acid polypeptide reads, in one-letter code: DEAD-box ATP-dependent RNA helicase 36 (501 aa).

The disordered stretch occupies residues 1–68; the sequence is MEVDGEARPF…AAAVTEHAGD (68 aa). A compositionally biased stretch (pro residues) spans 36–46; the sequence is EEPPNPSPSPA. Residues 59-68 show a composition bias toward low complexity; the sequence is AAAVTEHAGD. The Q motif signature appears at 77–105; sequence STFAELGLSQWLVDVCDSLGMRVPTAVQR. Residues 108–281 form the Helicase ATP-binding domain; the sequence is IPRALEGRDV…ELSGNNSYFF (174 aa). ATP is bound at residue 121 to 128; that stretch reads AETGSGKT. The DEAD box signature appears at 229–232; it reads DEAD. In terms of domain architecture, Helicase C-terminal spans 292 to 456; that stretch reads TLKQLYIHVP…AYDGEMRDVN (165 aa). Over residues 473-486 the composition is skewed to basic and acidic residues; it reads MADEGHEDKVQARK. Residues 473 to 501 form a disordered region; it reads MADEGHEDKVQARKEQKKRAQERKRKHDE. Residues 475–501 adopt a coiled-coil conformation; the sequence is DEGHEDKVQARKEQKKRAQERKRKHDE. Residues 487–501 show a composition bias toward basic residues; that stretch reads EQKKRAQERKRKHDE.

The protein belongs to the DEAD box helicase family. DDX49/DBP8 subfamily.

The enzyme catalyses ATP + H2O = ADP + phosphate + H(+). In Oryza sativa subsp. japonica (Rice), this protein is DEAD-box ATP-dependent RNA helicase 36.